Here is a 351-residue protein sequence, read N- to C-terminus: Biotin synthase (351 aa).

In terms of domain architecture, Radical SAM core spans asparagine 44–glutamine 262. [4Fe-4S] cluster is bound by residues cysteine 59, cysteine 63, and cysteine 66. Positions 103, 134, 194, and 266 each coordinate [2Fe-2S] cluster.

This sequence belongs to the radical SAM superfamily. Biotin synthase family. As to quaternary structure, homodimer. The cofactor is [4Fe-4S] cluster. [2Fe-2S] cluster is required as a cofactor.

It catalyses the reaction (4R,5S)-dethiobiotin + (sulfur carrier)-SH + 2 reduced [2Fe-2S]-[ferredoxin] + 2 S-adenosyl-L-methionine = (sulfur carrier)-H + biotin + 2 5'-deoxyadenosine + 2 L-methionine + 2 oxidized [2Fe-2S]-[ferredoxin]. The protein operates within cofactor biosynthesis; biotin biosynthesis; biotin from 7,8-diaminononanoate: step 2/2. Its function is as follows. Catalyzes the conversion of dethiobiotin (DTB) to biotin by the insertion of a sulfur atom into dethiobiotin via a radical-based mechanism. The sequence is that of Biotin synthase from Pseudomonas fluorescens (strain Pf0-1).